The following is a 296-amino-acid chain: MPLSGTPAPNKRRKSSKLIMELTGGGRESSGLNLGKKISVPRDVMLEELSLLTNRGSKMFKLRQMRVEKFIYENHPDVFSDSSMDHFQKFLPTVGGQLETAGQGFSYGKGSSGGQAGSSGSAGQYGSDRHQQGSGFGAGGSGGPGGQAGGGGAPGTVGLGEPGSGDQAGGDGKHVTVFKTYISPWDRAMGVDPQQKVELGIDLLAYGAKAELPKYKSFNRTAMPYGGYEKASKRMTFQMPKFDLGPLLSEPLVLYNQNLSNRPSFNRTPIPWLSSGEHVDYNVDVGIPLDGETEEL.

Ser82 is subject to Phosphoserine. Gly residues-rich tracts occupy residues 105 to 117 (FSYGKGSSGGQAG) and 134 to 170 (SGFGAGGSGGPGGQAGGGGAPGTVGLGEPGSGDQAGG). A disordered region spans residues 105–172 (FSYGKGSSGG…GSGDQAGGDG (68 aa)).

This sequence belongs to the myozenin family. In terms of assembly, interacts with ACTN2, ACTN3, FLNA, FLNB, FLNC, LDB3, PPP3CA and TCAP. Interacts via its C-terminal region with MYOT. As to expression, expressed primarily in skeletal muscle and specifically enriched in the gastrocnemius, which is composed predominantly of fast-twitch muscle fibers. Detected at lower levels in heart.

It localises to the nucleus. Its subcellular location is the cell projection. The protein localises to the pseudopodium. Its function is as follows. Myozenins may serve as intracellular binding proteins involved in linking Z-disk proteins such as alpha-actinin, gamma-filamin, TCAP/telethonin, LDB3/ZASP and localizing calcineurin signaling to the sarcomere. Plays an important role in the modulation of calcineurin signaling. May play a role in myofibrillogenesis. The chain is Myozenin-1 from Mus musculus (Mouse).